Here is a 249-residue protein sequence, read N- to C-terminus: MAPSRKFFVGGNWKMNGRKQSLGELIGTLNAAKVPADTKVVCAPPTAYIDFARQKLDPKIAVAAQNCYKVTNGAFTGEISPGMIKDCGATWVVLGHSERRHVFGESDELIGQKVAHALAEGLGVIACIGEKLDEREAGITEKVVFEQTKVITDNVKDWSKVVLAYEPVWAIGTGKTATPQQAQEVHEKLRGWLKSNVSDAVAQSTRIIYGGSVTGATCKELASQPDVDGFLVGGASLKPEFVDIINAKQ.

The substrate site is built by N12 and K14. The residue at position 14 (K14) is an N6-acetyllysine. Y68 is modified (3'-nitrotyrosine). Position 80 is a phosphoserine (S80). The active-site Electrophile is H96. S106 carries the phosphoserine modification. Residue K142 forms a Glycyl lysine isopeptide (Lys-Gly) (interchain with G-Cter in SUMO1) linkage. K149 is subject to N6-succinyllysine. K156 is modified (N6-acetyllysine; alternate). N6-succinyllysine; alternate is present on K156. S159 bears the Phosphoserine mark. The Proton acceptor role is filled by E166. A Phosphothreonine modification is found at T173. An N6-acetyllysine; alternate modification is found at K194. Residue K194 is modified to N6-succinyllysine; alternate. K194 is modified (N6-methyllysine; alternate). Residue S198 is modified to Phosphoserine. At Y209 the chain carries 3'-nitrotyrosine. At S212 the chain carries Phosphoserine. T214 is subject to Phosphothreonine. A Phosphoserine modification is found at S223. The residue at position 238 (K238) is an N6-acetyllysine.

Belongs to the triosephosphate isomerase family. As to quaternary structure, homodimer.

The protein resides in the cytoplasm. The enzyme catalyses dihydroxyacetone phosphate = methylglyoxal + phosphate. It carries out the reaction D-glyceraldehyde 3-phosphate = dihydroxyacetone phosphate. Its pathway is carbohydrate degradation; glycolysis; D-glyceraldehyde 3-phosphate from glycerone phosphate: step 1/1. It functions in the pathway carbohydrate biosynthesis; gluconeogenesis. Functionally, triosephosphate isomerase is an extremely efficient metabolic enzyme that catalyzes the interconversion between dihydroxyacetone phosphate (DHAP) and D-glyceraldehyde-3-phosphate (G3P) in glycolysis and gluconeogenesis. In terms of biological role, it is also responsible for the non-negligible production of methylglyoxal a reactive cytotoxic side-product that modifies and can alter proteins, DNA and lipids. This Gorilla gorilla gorilla (Western lowland gorilla) protein is Triosephosphate isomerase (TPI1).